A 196-amino-acid chain; its full sequence is ATP-dependent Clp protease proteolytic subunit (196 aa).

Ser-96 functions as the Nucleophile in the catalytic mechanism. The active site involves His-121.

The protein belongs to the peptidase S14 family. Fourteen ClpP subunits assemble into 2 heptameric rings which stack back to back to give a disk-like structure with a central cavity, resembling the structure of eukaryotic proteasomes.

It is found in the cytoplasm. It carries out the reaction Hydrolysis of proteins to small peptides in the presence of ATP and magnesium. alpha-casein is the usual test substrate. In the absence of ATP, only oligopeptides shorter than five residues are hydrolyzed (such as succinyl-Leu-Tyr-|-NHMec, and Leu-Tyr-Leu-|-Tyr-Trp, in which cleavage of the -Tyr-|-Leu- and -Tyr-|-Trp bonds also occurs).. Functionally, cleaves peptides in various proteins in a process that requires ATP hydrolysis. Has a chymotrypsin-like activity. Plays a major role in the degradation of misfolded proteins. This is ATP-dependent Clp protease proteolytic subunit from Streptococcus thermophilus (strain CNRZ 1066).